Reading from the N-terminus, the 350-residue chain is Phenylalanine--tRNA ligase alpha subunit (350 aa).

Glu-257 serves as a coordination point for Mg(2+).

The protein belongs to the class-II aminoacyl-tRNA synthetase family. Phe-tRNA synthetase alpha subunit type 1 subfamily. Tetramer of two alpha and two beta subunits. Requires Mg(2+) as cofactor.

The protein resides in the cytoplasm. The enzyme catalyses tRNA(Phe) + L-phenylalanine + ATP = L-phenylalanyl-tRNA(Phe) + AMP + diphosphate + H(+). This Listeria monocytogenes serotype 4a (strain HCC23) protein is Phenylalanine--tRNA ligase alpha subunit.